Consider the following 192-residue polypeptide: Phosphoheptose isomerase (192 aa).

The SIS domain maps to 37 to 192 (IAASLRDGGK…IMLIEKELAV (156 aa)). A substrate-binding site is contributed by 52 to 54 (NGG). Zn(2+)-binding residues include H61 and E65. Substrate contacts are provided by residues E65, 93–94 (ND), 119–121 (STS), S124, and Q172. Residues Q172 and H180 each coordinate Zn(2+).

It belongs to the SIS family. GmhA subfamily. As to quaternary structure, homotetramer. Requires Zn(2+) as cofactor.

The protein localises to the cytoplasm. It carries out the reaction 2 D-sedoheptulose 7-phosphate = D-glycero-alpha-D-manno-heptose 7-phosphate + D-glycero-beta-D-manno-heptose 7-phosphate. It participates in carbohydrate biosynthesis; D-glycero-D-manno-heptose 7-phosphate biosynthesis; D-glycero-alpha-D-manno-heptose 7-phosphate and D-glycero-beta-D-manno-heptose 7-phosphate from sedoheptulose 7-phosphate: step 1/1. Its function is as follows. Catalyzes the isomerization of sedoheptulose 7-phosphate in D-glycero-D-manno-heptose 7-phosphate. This is Phosphoheptose isomerase from Tolumonas auensis (strain DSM 9187 / NBRC 110442 / TA 4).